Reading from the N-terminus, the 131-residue chain is Antileukoproteinase (131 aa).

The first 25 residues, 1 to 25 (MKSCGLLPFTVLLALGILAPWTVEG), serve as a signal peptide directing secretion. WAP domains lie at 29 to 77 (DAIK…VNPV) and 83 to 131 (VWRK…LPPM). Intrachain disulfides connect Cys-36/Cys-65, Cys-44/Cys-69, Cys-52/Cys-64, Cys-58/Cys-73, Cys-90/Cys-119, Cys-97/Cys-123, Cys-106/Cys-118, and Cys-112/Cys-127. Positions 85–131 (RKPGRCVKTQARCMMLNPPNVCQRDGQCDGKYKCCEGICGKVCLPPM) are elastase inhibitory domain.

Interacts with GRN; interaction protects progranulin from proteolysis. Detected in bronchial epithelial cells. Detected in bronchoalveolar fluid after infection with M.tuberculosis (at protein level). Highest expression in lung, spleen, intestine and epididymis with lower levels in liver and seminal vesicle. No expression in brain, heart, kidney and muscle.

Its subcellular location is the secreted. Acid-stable proteinase inhibitor with strong affinities for trypsin, chymotrypsin, elastase, and cathepsin G. Modulates the innate immune response after bacterial infection. Contributes to regulate the inflammatory and immune responses to the intracellular parasite L.major. Down-regulates responses to bacterial lipopolysaccharide (LPS). Plays a role in regulating the activation of NF-kappa-B and inflammatory responses. Has antimicrobial activity against mycobacteria, but not against salmonella. Contributes to normal resistance against infection by M.tuberculosis. Required for normal resistance to L.major. Required for normal wound healing, probably by preventing tissue damage by limiting protease activity. Together with ELANE, required for normal differentiation and proliferation of bone marrow myeloid cells. The polypeptide is Antileukoproteinase (Slpi) (Mus musculus (Mouse)).